The primary structure comprises 261 residues: U11/U12 small nuclear ribonucleoprotein 31 kDa protein (261 aa).

Residues 18–51 (YYRYSSVAAPPPSNPKHQPSSSAKSSAPGGGSGG) form a disordered region. Residues 57 to 135 (STLYVSNLDF…RKLTVSIAAD (79 aa)) enclose the RRM domain. The CCHC-type zinc-finger motif lies at 153–169 (RCYECGDEGHLSYECPK). Positions 165–261 (YECPKNQLGP…YFSDESDDED (97 aa)) are disordered. Basic and acidic residues predominate over residues 226 to 235 (AGERLRKREA).

As to quaternary structure, component of the U11/U12 snRNPs that are part of the U12-type spliceosome. As to expression, ubiquitous. Abundantly expressed in the shoot apical neristem.

The protein resides in the nucleus. In terms of biological role, RNA chaperone required for proper U12 intron splicing and for normal growth and development of plants. Mainly responsible for meristem activity. Plays a role in regulating cell division. The chain is U11/U12 small nuclear ribonucleoprotein 31 kDa protein (SNRNP31) from Arabidopsis thaliana (Mouse-ear cress).